An 853-amino-acid chain; its full sequence is MAEPVGDLVVDLSLDAARFDEQMARVRRHFSGTESDAKKTAAVVEQSLSRQALAAQKAGISVGQYKAAMRMLPAQFTDVATQLAGGQSPWLILLQQGGQVKDSFGGMIPMFRGLAGAITLPMVGATSLAVATGALAYAWYQGNSTLSDFNKTLVLSGNQAGLTADRMLVLSRAGQAAGLTFNQTSESLSALVKAGVSGEAQIASISQSVARFSSASGVEVDKVAEAFGKLTTDPTSGLTAMARQFHNVSAEQIAYVAQLQRSGDEAGALQAANEAATKGFDDQTRRLKENMGTLETWADRTARAFKSMWDAVLDIGRPDTAQEMLIKAEAAYKKADDIWNLRKDDYFVNDEARARYWDDREKARLALEAARKKAEQQTQQDKNAQQQSDTEASRLKYTEEAQKAYERLQTPLEKYTARQEELNKALKDGKILQADYNTLMAAAKKDYEATLKKPKQSSVKVSAGDRQEDSAHAALLTLQAELRTLEKHAGANEKISQQRRDLWKAESQFAVLEEAAQRRQLSAQEKSLLAHKDETLEYKRQLAALGDKVTYQERLNALAQQADKFAQQQRAKRAAIDAKSRGLTDRQAEREATEQRLKEQYGDNPLALNNVMSEQKKTWAAEDQLRGNWMAGLKSGWSEWEESATDSMSQVKSAATQTFDGIAQNMAAMLTGSEQNWRSFTRSVLSMMTEILLKQAMVGIVGSIGSAIGGAVGGGASASGGTAIQAAAAKFHFATGGFTGTGGKYEPAGIVHRGEFVFTKEATSRIGVGNLYRLMRGYATGGYVGTPGSMADSRSQASGTFEQNNHVVINNDGTNGQIGPAALKAVYDMARKGARDEIQTQMRDGGLFSGGGR.

Coiled coils occupy residues 360-387 (REKA…AQQQ) and 548-568 (KVTY…FAQQ). The tract at residues 370-393 (ARKKAEQQTQQDKNAQQQSDTEAS) is disordered. The segment covering 376-387 (QQTQQDKNAQQQ) has biased composition (low complexity).

This sequence belongs to the Lambdavirus tape measure protein family. As to quaternary structure, interacts with the tail initiator complex presumably through its C-terminus domain. Interacts with the tail assembly protein G. Interacts with the tail assembly protein GT. Cleaved into mature protein H* by an unidentified protease.

Its subcellular location is the virion. Functionally, serves as a ruler that controls the length of tail by stopping the tail tube polymerization and is probably released from the tail shaft during infection to facilitate DNA translocation into the host cell. Assembles into a multimeric linear form possibly stabilized by the covering tail assembly proteins G and GT. Its C-terminus fixes the tail tip complex (J, I, L, K), thereby forming the tail assembly initiator complex. Tail tube proteins polymerize around tape measure protein, displacing the tail assembly protein G and GT. When the tail reaches the length specified by the tape measure protein, it stops and becomes capped by the tail terminator protein. Upon tail assembly, tape measure protein is cleaved into a form called H*, that plays a role later during virion entry in a new cell. Once assembled, the virion is released and can infect new cells by binding to the entry receptor LambB. After opening of a pore on the external membrane, the entry protein H* protein is probably released in the periplasmic space for successful DNA injection. The protein is Tape measure protein of Escherichia phage lambda (Bacteriophage lambda).